A 399-amino-acid polypeptide reads, in one-letter code: MKMRFLGLVVCLVLWTLHSEGSGGKLTAVDPETNMNVSEIISYWGFPSEEYLVETEDGYILCLNRIPHGRKNHSDKGPKPVVFLQHGLLADSSNWVTNLANSSLGFILADAGFDVWMGNSRGNTWSRKHKTLSVSQDEFWAFSYDEMAKYDLPASINFILNKTGQEQVYYVGHSQGTTIGFIAFSQIPELAKRIKMFFALGPVASVAFCTSPMAKLGRLPDHLIKDLFGDKEFLPQSAFLKWLGTHVCTHVILKELCGNLCFLLCGFNERNLNMSRVDVYTTHSPAGTSVQNMLHWSQAVKFQKFQAFDWGSSAKNYFHYNQSYPPTYNVKDMLVPTAVWSGGHDWLADVYDVNILLTQITNLVFHESIPEWEHLDFIWGLDAPWRLYNKIINLMRKYQ.

An N-terminal signal peptide occupies residues 1 to 27 (MKMRFLGLVVCLVLWTLHSEGSGGKLT). A propeptide spans 28–76 (AVDPETNMNVSEIISYWGFPSEEYLVETEDGYILCLNRIPHGRKNHSDK) (removed in mature form). N-linked (GlcNAc...) asparagine glycans are attached at residues N36, N72, N101, and N161. Residues 80-380 (PVVFLQHGLL…EWEHLDFIWG (301 aa)) form the AB hydrolase-1 domain. The Charge relay system role is filled by S174. N273 and N321 each carry an N-linked (GlcNAc...) asparagine glycan. Catalysis depends on H374, which acts as the Charge relay system.

The protein belongs to the AB hydrolase superfamily. Lipase family. Monomer. Glycosylation is not essential for catalytic activity. In terms of tissue distribution, most abundantly expressed in brain, lung, kidney and mammary gland, a moderate expression seen in placenta and expressed at low levels in the liver and heart.

It localises to the lysosome. It catalyses the reaction a sterol ester + H2O = a sterol + a fatty acid + H(+). The enzyme catalyses cholesteryl (9Z-octadecenoate) + H2O = cholesterol + (9Z)-octadecenoate + H(+). It carries out the reaction a triacylglycerol + H2O = a 1,2-diacylglycerol + a fatty acid + H(+). The catalysed reaction is 1,2-di-(9Z-octadecenoyl)-glycerol + (9Z)-octadecenoate + H(+) = 1,2,3-tri-(9Z-octadecenoyl)-glycerol + H2O. It catalyses the reaction a 1,2-diacylglycerol + H2O = a 1-acylglycerol + a fatty acid + H(+). The enzyme catalyses 1,2-di-(9Z-octadecenoyl)-glycerol + H2O = 1-(9Z-octadecenoyl)-glycerol + (9Z)-octadecenoate + H(+). It carries out the reaction a 1,3-diacylglycerol + H2O = a 1-acylglycerol + a fatty acid + H(+). The catalysed reaction is 1,3-di-(9Z-octadecenoyl)-glycerol + H2O = 1-(9Z-octadecenoyl)-glycerol + (9Z)-octadecenoate + H(+). Catalyzes the deacylation of cholesteryl ester core lipids of endocytosed low density lipoproteins to generate free fatty acids and cholesterol. Hydrolyzes triglycerides (1,2,3-triacylglycerol) and diglycerides (such as 1,2-diacylglycerol and 1,3-diacylglycerol) with preference for the acyl moieties at the sn-1 or sn-3 positions. The polypeptide is Lysosomal acid lipase/cholesteryl ester hydrolase (LIPA) (Homo sapiens (Human)).